Consider the following 433-residue polypeptide: Adenylosuccinate synthetase (433 aa).

Residues 13-19 and 41-43 contribute to the GTP site; these read GDEGKGK and GHT. The active-site Proton acceptor is aspartate 14. Mg(2+) contacts are provided by aspartate 14 and glycine 41. IMP is bound by residues 14–17, 39–42, threonine 130, arginine 144, glutamine 225, threonine 240, and arginine 304; these read DEGK and NAGH. Histidine 42 acts as the Proton donor in catalysis. 300 to 306 contributes to the substrate binding site; sequence STTGRKR. GTP-binding positions include arginine 306, 332–334, and 414–416; these read KLD and STG.

It belongs to the adenylosuccinate synthetase family. Homodimer. Mg(2+) serves as cofactor.

The protein localises to the cytoplasm. It catalyses the reaction IMP + L-aspartate + GTP = N(6)-(1,2-dicarboxyethyl)-AMP + GDP + phosphate + 2 H(+). The protein operates within purine metabolism; AMP biosynthesis via de novo pathway; AMP from IMP: step 1/2. Plays an important role in the de novo pathway of purine nucleotide biosynthesis. Catalyzes the first committed step in the biosynthesis of AMP from IMP. The sequence is that of Adenylosuccinate synthetase from Buchnera aphidicola subsp. Acyrthosiphon pisum (strain APS) (Acyrthosiphon pisum symbiotic bacterium).